The chain runs to 145 residues: uncharacterized protein (145 aa).

A helical transmembrane segment spans residues 97–117 (ISMLLLIVIIAIGLTISYMVI).

It localises to the membrane. This is an uncharacterized protein from Methanocaldococcus jannaschii (strain ATCC 43067 / DSM 2661 / JAL-1 / JCM 10045 / NBRC 100440) (Methanococcus jannaschii).